A 456-amino-acid chain; its full sequence is Phospholipase A1 member A (456 aa).

The signal sequence occupies residues M1–S24. Catalysis depends on S166, which acts as the Nucleophile. D190 serves as the catalytic Charge relay system. A disulfide bridge links C245 with C258. Residue H260 is the Charge relay system of the active site. Cystine bridges form between C282–C293 and C296–C304. N365 carries an N-linked (GlcNAc...) asparagine glycan.

It belongs to the AB hydrolase superfamily. Lipase family.

Its subcellular location is the secreted. The enzyme catalyses a 1,2-diacyl-sn-glycero-3-phospho-L-serine + H2O = a 2-acyl-sn-glycero-3-phospho-L-serine + a fatty acid + H(+). It catalyses the reaction 1,2-di-(9Z)-octadecenoyl-sn-glycero-3-phospho-L-serine + H2O = 2-(9Z-octadecenoyl)-sn-glycero-3-phospho-L-serine + (9Z)-octadecenoate + H(+). It carries out the reaction 1-hexadecanoyl-2-(5Z,8Z,11Z,14Z-eicosatetraenoyl)-sn-glycero-3-phospho-L-serine + H2O = 2-(5Z,8Z,11Z,14Z)-eicosatetraenoyl-sn-glycero-3-phospho-L-serine + hexadecanoate + H(+). The catalysed reaction is a 1-acyl-sn-glycero-3-phospho-L-serine + H2O = sn-glycero-3-phospho-L-serine + a fatty acid + H(+). The enzyme catalyses 1-(9Z-octadecenoyl)-sn-glycero-3-phospho-L-serine + H2O = sn-glycero-3-phospho-L-serine + (9Z)-octadecenoate + H(+). In terms of biological role, hydrolyzes the ester bond of the acyl group attached at the sn-1 position of phosphatidylserines (phospholipase A1 activity) and 1-acyl-2-lysophosphatidylserines (lysophospholipase activity) in the pathway of phosphatidylserines acyl chain remodeling. Cleaves phosphatidylserines exposed on the outer leaflet of the plasma membrane of apoptotic cells producing 2-acyl-1-lysophosphatidylserines, which in turn enhance mast cell activation and histamine production. Has no activity toward other glycerophospholipids including phosphatidylcholines, phosphatidylethanolamines, phosphatidic acids or phosphatidylinositols, or glycerolipids such as triolein. This is Phospholipase A1 member A from Rattus norvegicus (Rat).